Reading from the N-terminus, the 129-residue chain is Histone H3 (129 aa).

Residues 1-36 (MSRTKETARAKRTITSKKSKKAPSGASGVKRSHRRW) form a disordered region. Residues 10 to 21 (AKRTITSKKSKK) show a composition bias toward basic residues.

The protein belongs to the histone H3 family. In terms of assembly, the nucleosome is a histone octamer containing two molecules each of H2A, H2B, H3 and H4 assembled in one H3-H4 heterotetramer and two H2A-H2B heterodimers. The octamer wraps approximately 147 bp of DNA.

Its subcellular location is the nucleus. It is found in the chromosome. In terms of biological role, core component of nucleosome. Nucleosomes wrap and compact DNA into chromatin, limiting DNA accessibility to the cellular machineries which require DNA as a template. Histones thereby play a central role in transcription regulation, DNA repair, DNA replication and chromosomal stability. DNA accessibility is regulated via a complex set of post-translational modifications of histones, also called histone code, and nucleosome remodeling. The sequence is that of Histone H3 from Leishmania infantum.